Reading from the N-terminus, the 404-residue chain is Protein translocase subunit SecF (404 aa).

Transmembrane regions (helical) follow at residues 15 to 35 (KWYFLAFSLVFSVAGLISMGA), 225 to 245 (LLATLYSLGGMLVYLWFRFEL), 246 to 266 (IYGIGAVVACFHDTIITVGAF), 275 to 295 (LTVVAAILTLIGYSMNDTIVV), 327 to 347 (ILTSGLTFLTVLSLYVFGGEV), and 355 to 375 (LVIGILIGTYSSIAVAAPMLV).

This sequence belongs to the SecD/SecF family. SecF subfamily. Forms a complex with SecD. Part of the essential Sec protein translocation apparatus which comprises SecA, SecYEG and auxiliary proteins SecDF. Other proteins may also be involved.

The protein resides in the cell inner membrane. Its function is as follows. Part of the Sec protein translocase complex. Interacts with the SecYEG preprotein conducting channel. SecDF uses the proton motive force (PMF) to complete protein translocation after the ATP-dependent function of SecA. This Koribacter versatilis (strain Ellin345) protein is Protein translocase subunit SecF.